A 164-amino-acid chain; its full sequence is Translocator protein homolog (164 aa).

Helical transmembrane passes span 16–34, 52–72, 89–106, 112–132, and 141–163; these read WSAS…NSYK, SAFG…SHLA, ILYI…PLFY, KLAL…AKTW, and KWLI…YCLL.

This sequence belongs to the TspO/BZRP family.

The protein resides in the mitochondrion membrane. May play a role in the transport of porphyrins and heme. This chain is Translocator protein homolog, found in Schizosaccharomyces pombe (strain 972 / ATCC 24843) (Fission yeast).